The chain runs to 273 residues: Dermonecrotic toxin LhSicTox-alphaIA2av (273 aa).

The active site involves His-5. Mg(2+) contacts are provided by Glu-25 and Asp-27. Catalysis depends on His-41, which acts as the Nucleophile. Disulfide bonds link Cys-45–Cys-51 and Cys-47–Cys-190. A Mg(2+)-binding site is contributed by Asp-85.

It belongs to the arthropod phospholipase D family. Class II subfamily. It depends on Mg(2+) as a cofactor. In terms of tissue distribution, expressed by the venom gland.

The protein localises to the secreted. The catalysed reaction is an N-(acyl)-sphingosylphosphocholine = an N-(acyl)-sphingosyl-1,3-cyclic phosphate + choline. The enzyme catalyses an N-(acyl)-sphingosylphosphoethanolamine = an N-(acyl)-sphingosyl-1,3-cyclic phosphate + ethanolamine. It carries out the reaction a 1-acyl-sn-glycero-3-phosphocholine = a 1-acyl-sn-glycero-2,3-cyclic phosphate + choline. It catalyses the reaction a 1-acyl-sn-glycero-3-phosphoethanolamine = a 1-acyl-sn-glycero-2,3-cyclic phosphate + ethanolamine. Functionally, dermonecrotic toxins cleave the phosphodiester linkage between the phosphate and headgroup of certain phospholipids (sphingolipid and lysolipid substrates), forming an alcohol (often choline) and a cyclic phosphate. This toxin acts on sphingomyelin (SM). It may also act on ceramide phosphoethanolamine (CPE), lysophosphatidylcholine (LPC) and lysophosphatidylethanolamine (LPE), but not on lysophosphatidylserine (LPS), and lysophosphatidylglycerol (LPG). It acts by transphosphatidylation, releasing exclusively cyclic phosphate products as second products. Induces dermonecrosis, hemolysis, increased vascular permeability, edema, inflammatory response, and platelet aggregation. The chain is Dermonecrotic toxin LhSicTox-alphaIA2av from Loxosceles hirsuta (Recluse spider).